A 227-amino-acid chain; its full sequence is Enolase-phosphatase E1 (227 aa).

This sequence belongs to the HAD-like hydrolase superfamily. MasA/MtnC family. Monomer. Mg(2+) serves as cofactor.

It catalyses the reaction 5-methylsulfanyl-2,3-dioxopentyl phosphate + H2O = 1,2-dihydroxy-5-(methylsulfanyl)pent-1-en-3-one + phosphate. Its pathway is amino-acid biosynthesis; L-methionine biosynthesis via salvage pathway; L-methionine from S-methyl-5-thio-alpha-D-ribose 1-phosphate: step 3/6. The protein operates within amino-acid biosynthesis; L-methionine biosynthesis via salvage pathway; L-methionine from S-methyl-5-thio-alpha-D-ribose 1-phosphate: step 4/6. Bifunctional enzyme that catalyzes the enolization of 2,3-diketo-5-methylthiopentyl-1-phosphate (DK-MTP-1-P) into the intermediate 2-hydroxy-3-keto-5-methylthiopentenyl-1-phosphate (HK-MTPenyl-1-P), which is then dephosphorylated to form the acireductone 1,2-dihydroxy-3-keto-5-methylthiopentene (DHK-MTPene). This Pseudomonas syringae pv. tomato (strain ATCC BAA-871 / DC3000) protein is Enolase-phosphatase E1.